The chain runs to 1461 residues: Potassium channel K2 (1461 aa).

The next 6 helical transmembrane spans lie at 44–64 (IIEG…LIYI), 142–162 (FNYY…YISL), 183–203 (IYNM…MVII), 218–238 (LIDI…IFVF), 242–262 (IDIY…NVSY), and 281–301 (IVLG…TIQA). An intramembrane region (pore-forming) is located at residues 322 to 340 (YFYFSIISISTVGYGDIFP). The helical transmembrane segment at 349-369 (CIIFIFWTFIWVPIQFNDLII) threads the bilayer. Positions 771–794 (KRDDFDNNNNNNNNNIVKSRKKGR) are disordered.

In terms of assembly, may form oligomers or interact with other proteins.

It is found in the membrane. In terms of biological role, contributes to transmembrane potassium transport. This is Potassium channel K2 from Plasmodium falciparum (isolate 3D7).